We begin with the raw amino-acid sequence, 497 residues long: Guanosine-5'-triphosphate,3'-diphosphate pyrophosphatase (497 aa).

Belongs to the GppA/Ppx family. GppA subfamily.

The catalysed reaction is guanosine 3'-diphosphate 5'-triphosphate + H2O = guanosine 3',5'-bis(diphosphate) + phosphate + H(+). It functions in the pathway purine metabolism; ppGpp biosynthesis; ppGpp from GTP: step 2/2. In terms of biological role, catalyzes the conversion of pppGpp to ppGpp. Guanosine pentaphosphate (pppGpp) is a cytoplasmic signaling molecule which together with ppGpp controls the 'stringent response', an adaptive process that allows bacteria to respond to amino acid starvation, resulting in the coordinated regulation of numerous cellular activities. In Aliivibrio fischeri (strain ATCC 700601 / ES114) (Vibrio fischeri), this protein is Guanosine-5'-triphosphate,3'-diphosphate pyrophosphatase.